A 404-amino-acid polypeptide reads, in one-letter code: Serine/threonine transporter SstT (404 aa).

Helical transmembrane passes span 17-37 (IGIG…LTGF), 39-59 (ILGK…VFAL), 75-95 (MTLI…VAVL), 138-158 (ALAT…GLAL), 179-199 (IVVW…FTTI), 212-232 (FLIL…NPLI), 287-307 (IPLG…VLTL), and 313-333 (FGIP…AVSA).

Belongs to the dicarboxylate/amino acid:cation symporter (DAACS) (TC 2.A.23) family.

Its subcellular location is the cell membrane. It catalyses the reaction L-serine(in) + Na(+)(in) = L-serine(out) + Na(+)(out). The enzyme catalyses L-threonine(in) + Na(+)(in) = L-threonine(out) + Na(+)(out). Its function is as follows. Involved in the import of serine and threonine into the cell, with the concomitant import of sodium (symport system). The chain is Serine/threonine transporter SstT from Streptococcus pyogenes serotype M5 (strain Manfredo).